Consider the following 140-residue polypeptide: Sex-regulated protein janus-B (140 aa).

Residue arginine 42 coordinates substrate. Catalysis depends on histidine 69, which acts as the Proton acceptor. 110–112 (SRT) contacts substrate.

The protein belongs to the janus family.

In terms of biological role, janA and janB regulate somatic sex differentiation. The protein is Sex-regulated protein janus-B (janB) of Drosophila orena (Fruit fly).